The sequence spans 305 residues: Sulfate adenylyltransferase subunit 2 1 (305 aa).

The tract at residues R283–F305 is disordered.

It belongs to the PAPS reductase family. CysD subfamily. In terms of assembly, heterodimer composed of CysD, the smaller subunit, and CysN.

It carries out the reaction sulfate + ATP + H(+) = adenosine 5'-phosphosulfate + diphosphate. It functions in the pathway sulfur metabolism; hydrogen sulfide biosynthesis; sulfite from sulfate: step 1/3. With CysN forms the ATP sulfurylase (ATPS) that catalyzes the adenylation of sulfate producing adenosine 5'-phosphosulfate (APS) and diphosphate, the first enzymatic step in sulfur assimilation pathway. APS synthesis involves the formation of a high-energy phosphoric-sulfuric acid anhydride bond driven by GTP hydrolysis by CysN coupled to ATP hydrolysis by CysD. This Chromohalobacter salexigens (strain ATCC BAA-138 / DSM 3043 / CIP 106854 / NCIMB 13768 / 1H11) protein is Sulfate adenylyltransferase subunit 2 1.